The primary structure comprises 92 residues: Toxin RelE3 (92 aa).

The protein belongs to the RelE toxin family.

Functionally, toxic component of a type II toxin-antitoxin (TA) system. Its toxic effect is neutralized by coexpression with cognate antitoxin RelB3 but no other ParD or RelB antitoxin. This is Toxin RelE3 (relE3) from Caulobacter vibrioides (strain ATCC 19089 / CIP 103742 / CB 15) (Caulobacter crescentus).